Consider the following 11197-residue polypeptide: Nonribosomal peptide synthetase 5 (11197 aa).

Residues 19-413 (AQRARKQPDA…DGTLQVVGHK (395 aa)) form an adenylation (A) domain 1 region. The disordered stretch occupies residues 426-452 (HASSSASSVGETPGVTGPISTPMGDSV). Positions 690 to 897 (KQLRQFCQEQ…LMDESMKQQI (208 aa)) are condensation (C) domain 1. The adenylation (A) domain 2 stretch occupies residues 918–1310 (DAAQDYPDAP…GRHDGQLKVR (393 aa)). The Carrier 1 domain maps to 1446–1522 (ADRSPVHMML…DMANNIAISE (77 aa)). S1483 is subject to O-(pantetheine 4'-phosphoryl)serine. Residues 1952 to 2380 (VEDVYPCSPV…SDISLMDPLS (429 aa)) form a condensation (C) domain 2 region. Positions 2406–2805 (VARIEPDKMA…QRKDTQIKIR (400 aa)) are adenylation (A) domain 3. The Carrier 2 domain occupies 2945–3021 (DSLTSTEVTI…SLAAFVDYDS (77 aa)). The residue at position 2982 (S2982) is an O-(pantetheine 4'-phosphoryl)serine. The tract at residues 3041-3481 (EESFALSPIQ…TSTMKSEFTL (441 aa)) is epimerase (E) domain 1. Residues 3515-3957 (EEIFPCSPMQ…VSPETRCELD (443 aa)) are condensation (C) domain 3. The segment at 3976 to 4371 (FEQQVEKIPD…RRRDNQVKVR (396 aa)) is adenylation (A) domain 4. One can recognise a Carrier 3 domain in the interval 4508–4584 (RKLTPMEQQL…ELANHARFKA (77 aa)). Residue S4545 is modified to O-(pantetheine 4'-phosphoryl)serine. Residues 4603–5022 (FPLLPIQRMF…LNEYTAALRS (420 aa)) are epimerase (E) domain 2. The interval 5069–5501 (ESIYPCSPLQ…LVGDSERQGL (433 aa)) is condensation (C) domain 4. Residues 5521 to 5918 (EAQVKAIPDN…RRKDTQVKVR (398 aa)) form an adenylation (A) domain 5 region. The 74-residue stretch at 6068 to 6141 (SEAEDIIRAV…ALAQFVSQST (74 aa)) folds into the Carrier 4 domain. S6102 carries the post-translational modification O-(pantetheine 4'-phosphoryl)serine. An epimerase (E) domain 3 region spans residues 6162–6512 (FSLSPIQQMF…MEILFNYFGQ (351 aa)). The segment at 6636-7076 (EEIFPCSPIQ…LVGAETRREM (441 aa)) is condensation (C) domain 5. The adenylation (A) domain 6 stretch occupies residues 7097-7491 (ERNSQAMPDR…RRRDNQVKVR (395 aa)). The Carrier 5 domain maps to 7636–7712 (KPKTKMEEHF…DLAGRSRFKN (77 aa)). S7673 bears the O-(pantetheine 4'-phosphoryl)serine mark. Residues 7733 to 8162 (ALLPIQRLFF…KYMLETLASQ (430 aa)) form an epimerase (E) domain 4 region. Positions 8205 to 8638 (EASYPCSPLQ…MLGDSGRKRI (434 aa)) are condensation (C) domain 6. The adenylation (A) domain 7 stretch occupies residues 8660–8832 (EAHVKESPNR…DHRATATEIV (173 aa)). The 76-residue stretch at 9173-9248 (SAQTAVVQII…AMAAKAQQIG (76 aa)) folds into the Carrier 6 domain. S9209 is modified (O-(pantetheine 4'-phosphoryl)serine). The segment at 9565–9683 (RVKDMRRAIP…LHEVVSALQK (119 aa)) is epimerase (E) domain 5. The interval 9721–10116 (VEDVYPTSPM…LVPAKHMEQL (396 aa)) is condensation (C) domain 7. Positions 10136–10529 (DDMVRSTPTA…VGRKDTQIKI (394 aa)) are adenylation (A) domain 8. A Carrier 7 domain is found at 10663–10749 (LDSSDYVAMQ…TLAVTIKADM (87 aa)). S10708 is subject to O-(pantetheine 4'-phosphoryl)serine. The segment at 10806 to 11104 (NFLVTGSTGF…SLRPMSGPEW (299 aa)) is thioesterase (TE) domain.

It belongs to the NRP synthetase family.

Its pathway is secondary metabolite biosynthesis. Its function is as follows. Nonribosomal peptide synthetase; part of the Fg3_54/C64 gene cluster that mediates the biosynthesis of the octapeptide fusaoctaxin A, a virulence factor that is required for cell-to-cell invasiveness of plant host. The 2 nonribosomal peptide synthetases NRPS9 and NRPS5 form an assembly line which likely utilizes GABA as a starter unit (loaded on the unique module M1 of NRPS9) and sequentially incorporates seven extender units composed of the residues L-Ala, L-allo-Ile, L-Ser, L-Val, L-Ser, L-Leu and L-Leu, respectively. During the process, each of the residues that are tethered on modules M3-M7 of NRPS5 containing an E domain can undergo an epimerization reaction to produce a D-configuration before the transpeptidation reaction occurs. The elongation of the peptidyl chain might be terminated by module M8-mediated L-Leu incorporation, followed by R domain-catalyzed 4 electron reduction to release the resulting octapeptide from the assembly line as an alcohol. Fusaoctaxin A is cleaved by the cluster specific ABC transporter FGM5 to the pentapeptide fusapentaxin A and the tripeptide fusatrixin A. The other enzymes from the cluster, FGM1, FGM2, FGM3 and FGM9 seem not to be involved in the biosynthesis of fusaoctaxin A and their functions have still to be determined. The polypeptide is Nonribosomal peptide synthetase 5 (Gibberella zeae (strain ATCC MYA-4620 / CBS 123657 / FGSC 9075 / NRRL 31084 / PH-1) (Wheat head blight fungus)).